The primary structure comprises 657 residues: Zinc finger CCCH domain-containing protein 50 (657 aa).

ANK repeat units follow at residues 68–97 (EART…CVDV) and 104–136 (DGAT…DPAT). Low complexity predominate over residues 176-206 (SVASGSSSPPLSSSPDEGNRSPSSRSSSLSP). A disordered region spans residues 176–222 (SVASGSSSPPLSSSPDEGNRSPSSRSSSLSPITVDRGKKEYPVDPTL). 2 consecutive C3H1-type zinc fingers follow at residues 274-302 (PYTA…HGVF) and 311-333 (YRTR…AHDE). The disordered stretch occupies residues 507 to 566 (YSPRALDPSSLAHSPFGGMSPRSPRTMEPTSPLSARVGAPATQRPSVGSPRNSSAWGTVG). Over residues 549 to 562 (QRPSVGSPRNSSAW) the composition is skewed to polar residues.

This chain is Zinc finger CCCH domain-containing protein 50, found in Oryza sativa subsp. japonica (Rice).